The sequence spans 215 residues: Oligoribonuclease (215 aa).

Residues 5–170 enclose the Exonuclease domain; sequence LVWIDCEMTG…ADIHESIREL (166 aa). The active site involves Tyr-127. The tract at residues 196–215 is disordered; it reads LSDGAGAQEETDSAEAPQSG.

Belongs to the oligoribonuclease family.

It localises to the cytoplasm. In terms of biological role, 3'-to-5' exoribonuclease specific for small oligoribonucleotides. This chain is Oligoribonuclease, found in Mycobacterium bovis (strain BCG / Pasteur 1173P2).